Reading from the N-terminus, the 346-residue chain is Protein U59 (346 aa).

This sequence belongs to the herpesviridae U59/UL88 family.

The protein is Protein U59 of Elephantid herpesvirus 1 (isolate Asian elephant/Berlin/Kiba/1998) (EIHV-1).